A 441-amino-acid polypeptide reads, in one-letter code: uncharacterized protein (441 aa).

The next 11 membrane-spanning stretches (helical) occupy residues 68-88, 110-130, 131-151, 164-184, 194-214, 229-246, 260-280, 287-307, 337-357, 384-404, and 412-432; these read MAIA…GPFA, ALIA…PLLV, GALV…AALP, SVAI…MLLP, GASA…LWSL, AIHG…LHGA, SGLA…LLLV, AVGG…GAFL, VAAA…LGVA, VQDA…AALI, and VFVL…TIVG.

It belongs to the major facilitator superfamily.

Its subcellular location is the cell membrane. This is an uncharacterized protein from Mycobacterium tuberculosis (strain ATCC 25618 / H37Rv).